A 127-amino-acid chain; its full sequence is Aspartate 1-decarboxylase (127 aa).

The Schiff-base intermediate with substrate; via pyruvic acid role is filled by Ser-25. Ser-25 is subject to Pyruvic acid (Ser). Thr-57 lines the substrate pocket. Tyr-58 (proton donor) is an active-site residue. Substrate is bound at residue 73-75 (GAA).

Belongs to the PanD family. In terms of assembly, heterooctamer of four alpha and four beta subunits. The cofactor is pyruvate. Post-translationally, is synthesized initially as an inactive proenzyme, which is activated by self-cleavage at a specific serine bond to produce a beta-subunit with a hydroxyl group at its C-terminus and an alpha-subunit with a pyruvoyl group at its N-terminus.

Its subcellular location is the cytoplasm. It catalyses the reaction L-aspartate + H(+) = beta-alanine + CO2. It functions in the pathway cofactor biosynthesis; (R)-pantothenate biosynthesis; beta-alanine from L-aspartate: step 1/1. Functionally, catalyzes the pyruvoyl-dependent decarboxylation of aspartate to produce beta-alanine. This chain is Aspartate 1-decarboxylase, found in Halalkalibacterium halodurans (strain ATCC BAA-125 / DSM 18197 / FERM 7344 / JCM 9153 / C-125) (Bacillus halodurans).